Consider the following 91-residue polypeptide: Putative regulatory protein Cyan7425_4125 (91 aa).

This sequence belongs to the RemA family.

The protein is Putative regulatory protein Cyan7425_4125 of Cyanothece sp. (strain PCC 7425 / ATCC 29141).